A 146-amino-acid polypeptide reads, in one-letter code: MNPTPLRDYQRTVHFADTDAAGVVYFANLLRFCHEAYEDALAQLGVDLRQFFSNSGLIVPITEAQIRFLKPLYCGDRLRVTIDPQRLDTSRFQLTYTLYNEGGDRVAIAQTQHMCLQLPHRQRVPIPDPLPAWLKSAPEEASDRED.

D19 is an active-site residue.

It belongs to the 4-hydroxybenzoyl-CoA thioesterase family. DHNA-CoA hydrolase subfamily.

The catalysed reaction is 1,4-dihydroxy-2-naphthoyl-CoA + H2O = 1,4-dihydroxy-2-naphthoate + CoA + H(+). It functions in the pathway cofactor biosynthesis; phylloquinone biosynthesis. The protein operates within quinol/quinone metabolism; 1,4-dihydroxy-2-naphthoate biosynthesis; 1,4-dihydroxy-2-naphthoate from chorismate: step 7/7. Catalyzes the hydrolysis of 1,4-dihydroxy-2-naphthoyl-CoA (DHNA-CoA) to 1,4-dihydroxy-2-naphthoate (DHNA), a reaction involved in phylloquinone (vitamin K1) biosynthesis. This is 1,4-dihydroxy-2-naphthoyl-CoA hydrolase from Thermosynechococcus vestitus (strain NIES-2133 / IAM M-273 / BP-1).